The primary structure comprises 95 residues: uncharacterized protein (95 aa).

The interval 1–64 (MEIDDIFASK…PKGASGRKRT (64 aa)) is disordered. Over residues 18 to 28 (KSNDSKSEAKA) the composition is skewed to basic and acidic residues. Residues 35-49 (TKSTPSRPKPTNNQD) are compositionally biased toward polar residues.

This is an uncharacterized protein from Schizosaccharomyces pombe (strain 972 / ATCC 24843) (Fission yeast).